The sequence spans 196 residues: Prefoldin subunit 3 (196 aa).

N-acetylalanine is present on Ala-2. At Lys-58 the chain carries N6-acetyllysine.

This sequence belongs to the prefoldin subunit alpha family. As to quaternary structure, heterohexamer of two PFD-alpha type and four PFD-beta type subunits. Binds to the C-terminal part of VHL.

The protein resides in the cytoplasm. It is found in the nucleus. Binds specifically to cytosolic chaperonin (c-CPN) and transfers target proteins to it. Binds to nascent polypeptide chain and promotes folding in an environment in which there are many competing pathways for nonnative proteins. In Mus musculus (Mouse), this protein is Prefoldin subunit 3 (Vbp1).